The following is an 836-amino-acid chain: Phenylalanine--tRNA ligase beta subunit (836 aa).

Residues 44–160 form the tRNA-binding domain; that stretch reads PETTGPLVIG…EIAEPGTDAR (117 aa). The 76-residue stretch at 420–495 folds into the B5 domain; that stretch reads PSMPQIRMKT…RLEGLEDIPT (76 aa). Asp-473, Asp-479, Glu-482, and Glu-483 together coordinate Mg(2+). Positions 742 to 835 constitute an FDX-ACB domain; sequence SAFPVLHQDL…AAELFGATMR (94 aa).

This sequence belongs to the phenylalanyl-tRNA synthetase beta subunit family. Type 1 subfamily. Tetramer of two alpha and two beta subunits. Requires Mg(2+) as cofactor.

Its subcellular location is the cytoplasm. It catalyses the reaction tRNA(Phe) + L-phenylalanine + ATP = L-phenylalanyl-tRNA(Phe) + AMP + diphosphate + H(+). The chain is Phenylalanine--tRNA ligase beta subunit from Corynebacterium diphtheriae (strain ATCC 700971 / NCTC 13129 / Biotype gravis).